The following is a 424-amino-acid chain: Phosphomethylpyrimidine synthase (424 aa).

Residues Asn-66, Met-95, Tyr-124, His-163, 185–187 (SRG), 226–229 (DGMR), and Glu-265 contribute to the substrate site. His-269 is a binding site for Zn(2+). Substrate is bound at residue Phe-292. Residue His-333 participates in Zn(2+) binding. Positions 408, 411, and 415 each coordinate [4Fe-4S] cluster.

The protein belongs to the ThiC family. It depends on [4Fe-4S] cluster as a cofactor.

It catalyses the reaction 5-amino-1-(5-phospho-beta-D-ribosyl)imidazole + S-adenosyl-L-methionine = 4-amino-2-methyl-5-(phosphooxymethyl)pyrimidine + CO + 5'-deoxyadenosine + formate + L-methionine + 3 H(+). Its pathway is cofactor biosynthesis; thiamine diphosphate biosynthesis. Catalyzes the synthesis of the hydroxymethylpyrimidine phosphate (HMP-P) moiety of thiamine from aminoimidazole ribotide (AIR) in a radical S-adenosyl-L-methionine (SAM)-dependent reaction. The sequence is that of Phosphomethylpyrimidine synthase from Thermotoga neapolitana (strain ATCC 49049 / DSM 4359 / NBRC 107923 / NS-E).